Consider the following 210-residue polypeptide: Neuroendocrine protein 7B2 (210 aa).

The N-terminal stretch at 1–24 (MTSRMAILSGLLFWLLLEWNPAFA) is a signal peptide. A disulfide bridge links cysteine 118 with cysteine 128. Serine 139 and serine 203 each carry phosphoserine.

It belongs to the 7B2 family. As to quaternary structure, interacts with PCSK2/PC2 early in the secretory pathway. Dissociation occurs at later stages. Proteolytically cleaved in the Golgi by a furin-like convertase to generate bioactive peptides. In terms of processing, sulfated on tyrosine residues.

Its subcellular location is the secreted. Acts as a molecular chaperone for PCSK2/PC2, preventing its premature activation in the regulated secretory pathway. Binds to inactive PCSK2 in the endoplasmic reticulum and facilitates its transport from there to later compartments of the secretory pathway where it is proteolytically matured and activated. Also required for cleavage of PCSK2 but does not appear to be involved in its folding. Plays a role in regulating pituitary hormone secretion. The C-terminal peptide inhibits PCSK2 in vitro. The protein is Neuroendocrine protein 7B2 (Scg5) of Rattus norvegicus (Rat).